Consider the following 253-residue polypeptide: Isoprenyl transferase (253 aa).

Aspartate 30 is an active-site residue. Position 30 (aspartate 30) interacts with Mg(2+). Residues 31 to 34, tryptophan 35, histidine 51, and 79 to 81 each bind substrate; these read GNRR and STE. Asparagine 82 functions as the Proton acceptor in the catalytic mechanism. Residues phenylalanine 83, arginine 85, arginine 202, and 208 to 210 each bind substrate; that span reads RVS. Mg(2+) is bound at residue glutamate 221.

It belongs to the UPP synthase family. Homodimer. It depends on Mg(2+) as a cofactor.

Its function is as follows. Catalyzes the condensation of isopentenyl diphosphate (IPP) with allylic pyrophosphates generating different type of terpenoids. This Chlamydia muridarum (strain MoPn / Nigg) protein is Isoprenyl transferase.